A 342-amino-acid polypeptide reads, in one-letter code: Dihydroorotate dehydrogenase (quinone) (342 aa).

Residues A60–K64 and T84 each bind FMN. K64 lines the substrate pocket. A substrate-binding site is contributed by N109–F113. 2 residues coordinate FMN: N137 and N170. N170 lines the substrate pocket. S173 functions as the Nucleophile in the catalytic mechanism. Substrate is bound at residue N175. 2 residues coordinate FMN: K215 and T243. N244–T245 provides a ligand contact to substrate. FMN is bound by residues G266, G295, and Y316–S317.

This sequence belongs to the dihydroorotate dehydrogenase family. Type 2 subfamily. Monomer. Requires FMN as cofactor.

The protein localises to the cell membrane. The catalysed reaction is (S)-dihydroorotate + a quinone = orotate + a quinol. It participates in pyrimidine metabolism; UMP biosynthesis via de novo pathway; orotate from (S)-dihydroorotate (quinone route): step 1/1. In terms of biological role, catalyzes the conversion of dihydroorotate to orotate with quinone as electron acceptor. This is Dihydroorotate dehydrogenase (quinone) from Nitrosomonas europaea (strain ATCC 19718 / CIP 103999 / KCTC 2705 / NBRC 14298).